A 186-amino-acid polypeptide reads, in one-letter code: Ras-related protein rapA (186 aa).

12–19 (GSGGVGKS) contacts GTP. Positions 34–42 (YDPTIEDSY) match the Effector region motif. GTP contacts are provided by residues 59-63 (DTAGT) and 118-121 (NKCD). Cys183 carries the cysteine methyl ester modification. Cys183 carries S-geranylgeranyl cysteine lipidation. Residues 184–186 (ALL) constitute a propeptide, removed in mature form.

It belongs to the small GTPase superfamily. Ras family. As to quaternary structure, interacts with ralGDS (only when rapA is in its GTP-bound state). Interacts with the Rap guanine nucleotide exchange factor glfB.

The protein localises to the cell membrane. It carries out the reaction GTP + H2O = GDP + phosphate + H(+). Its function is as follows. G protein of the Ras family that positively regulates phagocytosis and negatively regulates macropinocytosis. May be involved in the activation of guanylyl cyclase during the response to hyperosmotic conditions. Overexpressing cells generate alterations in cell shape and contractile responses. Involved in chemotaxis via regulation of the balance of Ras and Rap signaling at the leading edge of chemotaxing cells. The protein is Ras-related protein rapA (rapA) of Dictyostelium discoideum (Social amoeba).